Consider the following 184-residue polypeptide: ATP synthase subunit delta (184 aa).

Belongs to the ATPase delta chain family. As to quaternary structure, F-type ATPases have 2 components, F(1) - the catalytic core - and F(0) - the membrane proton channel. F(1) has five subunits: alpha(3), beta(3), gamma(1), delta(1), epsilon(1). F(0) has three main subunits: a(1), b(2) and c(10-14). The alpha and beta chains form an alternating ring which encloses part of the gamma chain. F(1) is attached to F(0) by a central stalk formed by the gamma and epsilon chains, while a peripheral stalk is formed by the delta and b chains.

The protein localises to the cell inner membrane. Its function is as follows. F(1)F(0) ATP synthase produces ATP from ADP in the presence of a proton or sodium gradient. F-type ATPases consist of two structural domains, F(1) containing the extramembraneous catalytic core and F(0) containing the membrane proton channel, linked together by a central stalk and a peripheral stalk. During catalysis, ATP synthesis in the catalytic domain of F(1) is coupled via a rotary mechanism of the central stalk subunits to proton translocation. In terms of biological role, this protein is part of the stalk that links CF(0) to CF(1). It either transmits conformational changes from CF(0) to CF(1) or is implicated in proton conduction. The protein is ATP synthase subunit delta of Dichelobacter nodosus (strain VCS1703A).